A 424-amino-acid polypeptide reads, in one-letter code: Tyrosine--tRNA ligase (424 aa).

Residue tyrosine 36 participates in L-tyrosine binding. The 'HIGH' region signature appears at 41 to 50 (PTAPSLHAGH). Residues tyrosine 171 and glutamine 175 each coordinate L-tyrosine. The short motif at 231–235 (KFGKS) is the 'KMSKS' region element. Lysine 234 is a binding site for ATP. The 58-residue stretch at 356 to 413 (DGIVDLLVASGLSASKGAARRTIHEGGVSVNNIRVDNEEWVPQSSDFLHGRWLVLRRG) folds into the S4 RNA-binding domain.

It belongs to the class-I aminoacyl-tRNA synthetase family. TyrS type 1 subfamily. As to quaternary structure, homodimer.

Its subcellular location is the cytoplasm. It carries out the reaction tRNA(Tyr) + L-tyrosine + ATP = L-tyrosyl-tRNA(Tyr) + AMP + diphosphate + H(+). Functionally, catalyzes the attachment of tyrosine to tRNA(Tyr) in a two-step reaction: tyrosine is first activated by ATP to form Tyr-AMP and then transferred to the acceptor end of tRNA(Tyr). This is Tyrosine--tRNA ligase from Mycobacterium bovis (strain ATCC BAA-935 / AF2122/97).